Reading from the N-terminus, the 286-residue chain is tRNA (guanine-N(7)-)-methyltransferase (286 aa).

The disordered stretch occupies residues 1–22 (MGRARPKSQKRGDYRVSRSQEN). Residues Gly104, 127–128 (EI), 162–163 (NS), and Cys182 each bind S-adenosyl-L-methionine. The active site involves Asp185. Position 260–262 (260–262 (TEE)) interacts with S-adenosyl-L-methionine.

The protein belongs to the class I-like SAM-binding methyltransferase superfamily. TrmB family. Forms a complex with TRM82.

It localises to the nucleus. The enzyme catalyses guanosine(46) in tRNA + S-adenosyl-L-methionine = N(7)-methylguanosine(46) in tRNA + S-adenosyl-L-homocysteine. It functions in the pathway tRNA modification; N(7)-methylguanine-tRNA biosynthesis. In terms of biological role, catalyzes the formation of N(7)-methylguanine at position 46 (m7G46) in tRNA. The sequence is that of tRNA (guanine-N(7)-)-methyltransferase from Colletotrichum orbiculare (strain 104-T / ATCC 96160 / CBS 514.97 / LARS 414 / MAFF 240422) (Cucumber anthracnose fungus).